We begin with the raw amino-acid sequence, 245 residues long: tRNA (guanine-N(7)-)-methyltransferase (245 aa).

Residues glutamate 75, glutamate 100, aspartate 127, and aspartate 149 each coordinate S-adenosyl-L-methionine. The active site involves aspartate 149. Substrate is bound by residues lysine 153, aspartate 185, and 222–225; that span reads TKFE.

The protein belongs to the class I-like SAM-binding methyltransferase superfamily. TrmB family.

The catalysed reaction is guanosine(46) in tRNA + S-adenosyl-L-methionine = N(7)-methylguanosine(46) in tRNA + S-adenosyl-L-homocysteine. The protein operates within tRNA modification; N(7)-methylguanine-tRNA biosynthesis. Functionally, catalyzes the formation of N(7)-methylguanine at position 46 (m7G46) in tRNA. The chain is tRNA (guanine-N(7)-)-methyltransferase from Acinetobacter baylyi (strain ATCC 33305 / BD413 / ADP1).